The following is a 26-amino-acid chain: Histone H2B.1, sperm (26 aa).

The interval 1–26 (MPSQKSPTKRSPTKRSPQKGGKGAKR) is disordered. Short sequence motifs (SPKK motif) lie at residues 6–9 (SPTK), 11–14 (SPTK), and 16–19 (SPQK). The segment covering 7 to 26 (PTKRSPTKRSPQKGGKGAKR) has biased composition (basic residues). Phosphoserine occurs at positions 11 and 16.

Belongs to the histone H2B family. The nucleosome is a histone octamer containing two molecules each of H2A, H2B, H3 and H4 assembled in one H3-H4 heterotetramer and two H2A-H2B heterodimers. The octamer wraps approximately 147 bp of DNA. Monoubiquitination gives a specific tag for epigenetic transcriptional activation and is also prerequisite for histone H3 'Lys-4' and 'Lys-79' methylation. In terms of processing, phosphorylated on SPKK motifs 2 and 3; which may regulate DNA binding. Dephosphorylated during maturation of spermatids to mature sperm and rephosphorylated at fertilization.

It is found in the nucleus. The protein localises to the chromosome. Its function is as follows. Core component of nucleosome. Nucleosomes wrap and compact DNA into chromatin, limiting DNA accessibility to the cellular machineries which require DNA as a template. Histones thereby play a central role in transcription regulation, DNA repair, DNA replication and chromosomal stability. DNA accessibility is regulated via a complex set of post-translational modifications of histones, also called histone code, and nucleosome remodeling. This chain is Histone H2B.1, sperm, found in Echinus esculentus (Sea urchin).